A 383-amino-acid chain; its full sequence is Na(+)/H(+) antiporter NhaA (383 aa).

11 consecutive transmembrane segments (helical) span residues 21-41, 56-76, 94-114, 123-143, 152-172, 175-195, 202-222, 258-278, 287-307, 326-346, and 355-375; these read AAGVMLMAASAIGMVFANSIW, LTMRGWINDALMALFFLLAGL, LLPGVAAIGGMVVPAIIYVAF, GWAIPTATDIAFALGVLALAG, VFLTALAIVDDLGAVIVIALF, GTLSVLPGAGVAAILGLLLML, TLFPYLLAGVPLWWLTLKSGI, FVILPLFGFANAGISLHGVTV, LGVGAALMLGKPLGVLGAVSI, IGIAFLCGIGFTMSLFIAILA, and QIKLGILSGSMLSGLCGYILL.

Belongs to the NhaA Na(+)/H(+) (TC 2.A.33) antiporter family.

It is found in the cell inner membrane. The catalysed reaction is Na(+)(in) + 2 H(+)(out) = Na(+)(out) + 2 H(+)(in). Na(+)/H(+) antiporter that extrudes sodium in exchange for external protons. This is Na(+)/H(+) antiporter NhaA from Granulibacter bethesdensis (strain ATCC BAA-1260 / CGDNIH1).